The chain runs to 700 residues: Elongation factor G (700 aa).

The tr-type G domain maps to 10-285 (DRTRNIGIMA…AVIDYLPSPL (276 aa)). GTP-binding positions include 19-26 (AHIDAGKT), 83-87 (DTPGH), and 137-140 (NKMD).

Belongs to the TRAFAC class translation factor GTPase superfamily. Classic translation factor GTPase family. EF-G/EF-2 subfamily.

It localises to the cytoplasm. Catalyzes the GTP-dependent ribosomal translocation step during translation elongation. During this step, the ribosome changes from the pre-translocational (PRE) to the post-translocational (POST) state as the newly formed A-site-bound peptidyl-tRNA and P-site-bound deacylated tRNA move to the P and E sites, respectively. Catalyzes the coordinated movement of the two tRNA molecules, the mRNA and conformational changes in the ribosome. This chain is Elongation factor G, found in Lacticaseibacillus paracasei (strain ATCC 334 / BCRC 17002 / CCUG 31169 / CIP 107868 / KCTC 3260 / NRRL B-441) (Lactobacillus paracasei).